Consider the following 224-residue polypeptide: Required for respiratory growth protein 9, mitochondrial (224 aa).

The transit peptide at 1 to 42 directs the protein to the mitochondrion; sequence MIPFTSGKCYDRFPSMLFTYRVVIGRSFCQAHRGSLMAENRS. Disordered stretches follow at residues 53–72 and 186–224; these read HESSLTSKEQREKSKDDETP and SSPSVVATTRPSKNAKSNKRTKNKLHLLQQREHDHEHSE. A compositionally biased stretch (basic and acidic residues) spans 60–72; the sequence is KEQREKSKDDETP. Polar residues predominate over residues 186–200; it reads SSPSVVATTRPSKNA. Residues 201 to 210 are compositionally biased toward basic residues; that stretch reads KSNKRTKNKL. Residues 214–224 are compositionally biased toward basic and acidic residues; it reads QQREHDHEHSE.

This sequence belongs to the RRG9 family.

The protein resides in the mitochondrion. Required for respiratory activity and maintenance and expression of the mitochondrial genome. In Zygosaccharomyces rouxii (strain ATCC 2623 / CBS 732 / NBRC 1130 / NCYC 568 / NRRL Y-229), this protein is Required for respiratory growth protein 9, mitochondrial (RRG9).